The chain runs to 491 residues: Ketol-acid reductoisomerase (NADP(+)) (491 aa).

Positions 15–208 (AQLGKCRFMG…GGHRAGVLES (194 aa)) constitute a KARI N-terminal Rossmann domain. NADP(+)-binding positions include 45 to 48 (CGAQ), Arg-68, Arg-76, Ser-78, and 108 to 110 (DKQ). His-132 is a catalytic residue. Gly-158 contributes to the NADP(+) binding site. KARI C-terminal knotted domains follow at residues 209-344 (SFVA…TAPQ) and 345-484 (YEGK…MTDM). Mg(2+)-binding residues include Asp-217, Glu-221, Glu-389, and Glu-393. Ser-414 is a substrate binding site.

It belongs to the ketol-acid reductoisomerase family. Requires Mg(2+) as cofactor.

The catalysed reaction is (2R)-2,3-dihydroxy-3-methylbutanoate + NADP(+) = (2S)-2-acetolactate + NADPH + H(+). The enzyme catalyses (2R,3R)-2,3-dihydroxy-3-methylpentanoate + NADP(+) = (S)-2-ethyl-2-hydroxy-3-oxobutanoate + NADPH + H(+). The protein operates within amino-acid biosynthesis; L-isoleucine biosynthesis; L-isoleucine from 2-oxobutanoate: step 2/4. It participates in amino-acid biosynthesis; L-valine biosynthesis; L-valine from pyruvate: step 2/4. Its function is as follows. Involved in the biosynthesis of branched-chain amino acids (BCAA). Catalyzes an alkyl-migration followed by a ketol-acid reduction of (S)-2-acetolactate (S2AL) to yield (R)-2,3-dihydroxy-isovalerate. In the isomerase reaction, S2AL is rearranged via a Mg-dependent methyl migration to produce 3-hydroxy-3-methyl-2-ketobutyrate (HMKB). In the reductase reaction, this 2-ketoacid undergoes a metal-dependent reduction by NADPH to yield (R)-2,3-dihydroxy-isovalerate. This is Ketol-acid reductoisomerase (NADP(+)) from Escherichia coli O7:K1 (strain IAI39 / ExPEC).